A 224-amino-acid polypeptide reads, in one-letter code: MKRTSRSLTAALLGIAALLAGCIKPNTFDPYANPGRGELDRRQKIVNGRPDLETVQQQLANLDATIRAMIAKYSPQTRFSTGVTVSHLTNGCNDPFTRTIGRQEASELFFGRPAPTPQQWLQIVTELAPVFKAAGFRPNNSVPGDPPQPLGAPNYSQIRDDGVTINLVNGDNRGPLGYSYNTGCHPPAAWRTAPPPLNMRPANDPDVHYPYLYGSPGGRTRDAY.

The signal sequence occupies residues 1-21; it reads MKRTSRSLTAALLGIAALLAG. The N-palmitoyl cysteine moiety is linked to residue cysteine 22. Cysteine 22 carries S-diacylglycerol cysteine lipidation.

The protein to M.bovis LprP.

The protein resides in the cell membrane. This is an uncharacterized protein from Mycobacterium tuberculosis (strain ATCC 25618 / H37Rv).